The following is a 373-amino-acid chain: Probable cysteine protease RD19C (373 aa).

An N-terminal signal peptide occupies residues 1–20 (MDRVVFFFLIAATLLAGSLG). A propeptide spans 21 to 139 (STVISGEVTD…QTAPILPTSD (119 aa)) (activation peptide). Disulfide bonds link C161-C211 and C195-C245. The active site involves C164. N258 carries an N-linked (GlcNAc...) asparagine glycan. C301 and C356 are joined by a disulfide. Residues H307 and N334 contribute to the active site.

Belongs to the peptidase C1 family.

The protein resides in the lytic vacuole. Its function is as follows. Probable thiol protease. This is Probable cysteine protease RD19C from Arabidopsis thaliana (Mouse-ear cress).